Here is an 878-residue protein sequence, read N- to C-terminus: Alanine--tRNA ligase (878 aa).

Zn(2+)-binding residues include histidine 565, histidine 569, cysteine 667, and histidine 671.

It belongs to the class-II aminoacyl-tRNA synthetase family. Requires Zn(2+) as cofactor.

The protein localises to the cytoplasm. It carries out the reaction tRNA(Ala) + L-alanine + ATP = L-alanyl-tRNA(Ala) + AMP + diphosphate. Its function is as follows. Catalyzes the attachment of alanine to tRNA(Ala) in a two-step reaction: alanine is first activated by ATP to form Ala-AMP and then transferred to the acceptor end of tRNA(Ala). Also edits incorrectly charged Ser-tRNA(Ala) and Gly-tRNA(Ala) via its editing domain. The polypeptide is Alanine--tRNA ligase (Desulforamulus reducens (strain ATCC BAA-1160 / DSM 100696 / MI-1) (Desulfotomaculum reducens)).